The chain runs to 446 residues: MTLVRFAPSPTGYLHIGNARPALLNALFARRTGGRFLLRLDDTDAERSTEAFAEAIGEDLAWLGIVPDLFARQSARTAQHDAAADRLRAAGRLYPCYETPEELERRRRRQLGRGQPPIYDRAALRLTGDERAALEAEGRRPHWRFLLEARTVGWDDLVRGPAHVDCASLSDPVLIRADGSYLYTLPSVVDDADLGITHVIRGEDHVTNTGVQVQIFEALGAAVPVFGHHNLLTTADGEGLSKRLGHLSLRGLREAGYEPAAVRSLAVLTGSAESVRAVPDLDTLAGLVDLGEISRAPARFDPAELDGLNARLIHAMPYREAAARLADLGIPADRAEAFWLAVRANLSRVPEAAPWWRVVTGPVEPVLTEPAVIAAAVESLPPEPFGPETWNAWTTEIRTRTGAKGRGLFMPLRLALTGLEHGPDLAGLLPLIGRERAARRLSGAAA.

The short motif at 8-18 (PSPTGYLHIGN) is the 'HIGH' region element. The 'KMSKS' region motif lies at 239 to 243 (GLSKR). Lysine 242 provides a ligand contact to ATP.

Belongs to the class-I aminoacyl-tRNA synthetase family. Glutamate--tRNA ligase type 1 subfamily. In terms of assembly, monomer.

It is found in the cytoplasm. The enzyme catalyses tRNA(Glu) + L-glutamate + ATP = L-glutamyl-tRNA(Glu) + AMP + diphosphate. Functionally, catalyzes the attachment of glutamate to tRNA(Glu) in a two-step reaction: glutamate is first activated by ATP to form Glu-AMP and then transferred to the acceptor end of tRNA(Glu). In Methylobacterium radiotolerans (strain ATCC 27329 / DSM 1819 / JCM 2831 / NBRC 15690 / NCIMB 10815 / 0-1), this protein is Glutamate--tRNA ligase 2.